The following is a 1217-amino-acid chain: Myosin-5 (1217 aa).

The span at 1 to 11 shows a compositional bias: basic residues; it reads MAILKRGARNK. Residues 1 to 24 are disordered; the sequence is MAILKRGARNKTHQEPAKRGGNNI. Residues 37 to 716 form the Myosin motor domain; sequence VGVSDLTLLT…TLFALENMRD (680 aa). Residue 130-137 coordinates ATP; that stretch reads GESGAGKT. S358 is subject to Phosphoserine. The tract at residues 405 to 487 is actin-binding; the sequence is SIGILDIYGF…PGIFAAMNDS (83 aa). IQ domains lie at 720–740 and 741–766; these read HNMA…RIDA and AVKI…YGTS. One can recognise a TH1 domain in the interval 772–962; it reads KERRSMSLLG…TIFVRRGNPA (191 aa). Disordered regions lie at residues 956-1102, 1145-1174, and 1197-1217; these read VRRG…NPSE, GAKA…AQTV, and NKMR…DDDW. The span at 965-974 shows a compositional bias: basic residues; it reads KSKKKPRKKS. Positions 976-987 are enriched in polar residues; that stretch reads GMSAPTTQSSKT. A compositionally biased stretch (low complexity) spans 994–1007; it reads SSNNQNTTVSQSLN. The segment covering 1025–1038 has biased composition (pro residues); the sequence is PAPPPPGSKKPAPQ. Residues 1050–1071 show a composition bias toward low complexity; it reads PQAQMQTQTQIPASQSSATQSS. The segment covering 1072-1081 has biased composition (pro residues); sequence IPPPPPPPPS. In terms of domain architecture, SH3 spans 1083–1145; the sequence is TSEPQFEAAY…PTAYMVKHEG (63 aa). The segment covering 1162 to 1174 has biased composition (polar residues); that stretch reads IQNQSQPASAQTV. A compositionally biased stretch (acidic residues) spans 1203–1217; sequence SDEEAAASSDNDDDW.

Belongs to the TRAFAC class myosin-kinesin ATPase superfamily. Myosin family. In terms of processing, phosphorylation of the TEDS site (Ser-358) is required for the polarization of the actin cytoskeleton. Phosphorylation probably activates the myosin-I ATPase activity.

It is found in the cytoplasm. It localises to the cytoskeleton. The protein localises to the actin patch. In terms of biological role, type-I myosin implicated in the organization of the actin cytoskeleton. Required for proper actin cytoskeleton polarization. At the cell cortex, assembles in patch-like structures together with proteins from the actin-polymerizing machinery and promotes actin assembly. Functions as actin nucleation-promoting factor (NPF) for the Arp2/3 complex. This chain is Myosin-5 (MYO5), found in Candida glabrata (strain ATCC 2001 / BCRC 20586 / JCM 3761 / NBRC 0622 / NRRL Y-65 / CBS 138) (Yeast).